A 560-amino-acid chain; its full sequence is MNEKIVREQRGGEDSPSSVSAKSATAAASASTASMTFASAALESHKTTTITTASSSPRTSGASASASSSSRSASAPASSSSQQEKQPMLNATDMRELREIKQLLWGDNVREDVFKRWSQGFEFSKVEPSALVQKQGGPCAVIAPVQAYLLKIIIMDLPGIKLSEISLDKSQNLLIQALCDILKNCRAPRYRIVHLLRRRGNATEAGSTKKRSPAGEEESALAGQAAGSSEEVEEAAEATPASVSKLSQALQLEHDMHQELSPDEFHERLHTLHFKNIAAVARYYMENYDQLAHTYGVLLFMYSVFLTKGLELVAADISDTSEPLIHSTYGYGGQSLINLMLTGRAVAHVWDNEQDVGGLKLRGICEQSDIGFITLMEEMRYCTVGSFFKNPRYPVWVMGSDTHLTVLFSNEKRLVSPETPSETGRRIFKSYDPEGNNFISTTMLREVLIALNLVSEPAYVALMQKRLDPENLGIILLNAFMDEFFPLESRSTPDTFELMHYNGIPGSNENNKVRYYCGTAILLEGDLKSVCTSNPMVTCLQTKWPNIEINWHDGHMPSLN.

Basic and acidic residues predominate over residues 1–13 (MNEKIVREQRGGE). 2 disordered regions span residues 1–30 (MNEK…AASA) and 44–91 (SHKT…MLNA). Low complexity-rich tracts occupy residues 15–30 (SPSS…AASA) and 52–81 (TASS…SSSS). Cysteine 139 functions as the Nucleophile in the catalytic mechanism. Residues 203 to 237 (TEAGSTKKRSPAGEEESALAGQAAGSSEEVEEAAE) form a disordered region. Serine 212 and serine 219 each carry phosphoserine. Histidine 403 (proton acceptor) is an active-site residue.

It belongs to the MINDY deubiquitinase family. FAM188 subfamily.

The catalysed reaction is Thiol-dependent hydrolysis of ester, thioester, amide, peptide and isopeptide bonds formed by the C-terminal Gly of ubiquitin (a 76-residue protein attached to proteins as an intracellular targeting signal).. Its function is as follows. Hydrolase that can remove 'Lys-48'-linked conjugated ubiquitin from proteins. The protein is Ubiquitin carboxyl-terminal hydrolase MINDY-3 homolog (mindy3) of Drosophila melanogaster (Fruit fly).